Consider the following 299-residue polypeptide: Inosose dehydratase (299 aa).

Belongs to the IolE/MocC family. Glutathione serves as cofactor. Requires Co(2+) as cofactor. The cofactor is Mn(2+).

It catalyses the reaction scyllo-inosose = 3D-3,5/4-trihydroxycyclohexane-1,2-dione + H2O. In terms of biological role, catalyzes the dehydration of inosose (2-keto-myo-inositol, 2KMI or 2,4,6/3,5-pentahydroxycyclohexanone) to 3D-(3,5/4)-trihydroxycyclohexane-1,2-dione (D-2,3-diketo-4-deoxy-epi-inositol). The protein is Inosose dehydratase of Klebsiella pneumoniae subsp. pneumoniae (strain ATCC 700721 / MGH 78578).